The sequence spans 707 residues: Serine/threonine protein kinase UL97 (707 aa).

Over residues 1–14 (MSSALRSRARSASL) the composition is skewed to low complexity. 4 disordered regions span residues 1–32 (MSSALRSRARSASLGTTTQGWDPPPLRRPSRA), 113–147 (DGEKEDAASDKENQRRPVVPSTSSRGSAASGDGYH), 176–199 (FTGGSDPSDSVSGVRGGRKRPLRP), and 231–264 (ESQDSAVASGPGRVPQPLSGSSGEESATAVEADS). The segment covering 113 to 127 (DGEKEDAASDKENQR) has biased composition (basic and acidic residues). The segment covering 178 to 188 (GGSDPSDSVSG) has biased composition (low complexity). Asp-456 serves as the catalytic Proton acceptor.

Belongs to the protein kinase superfamily. Tyr protein kinase family. HCMV ganciclovir subfamily. As to quaternary structure, interacts with UL83. In terms of processing, autophosphorylates on serine and threonine residues.

The protein resides in the virion. The catalysed reaction is L-seryl-[protein] + ATP = O-phospho-L-seryl-[protein] + ADP + H(+). It catalyses the reaction L-threonyl-[protein] + ATP = O-phospho-L-threonyl-[protein] + ADP + H(+). In terms of biological role, serine/threonine protein kinase that plays important roles in several processes including nuclear viral egress, viral replication or regulation of host cell cycle progression. Participates in the acquisition of tegument during virion morphogenesis in the nucleus. Redistributes the host nuclear lamina by phosphorylating cellular Lamins-A/C. Plays a role in viral DNA synthesis by phosphorylating the DNA polymerase processivity factor UL44. Stimulates host cell cycle to support viral DNA synthesis by phosphorylating host retinoblastoma/RB1 protein. Additional substrates have been identified including host EF1D or H2B. Also phosphorylates host SAMHD1 and thereby counteracts its antiviral effect by reducing its dNTP hydrolase activity. The protein is Serine/threonine protein kinase UL97 (UL97) of Homo sapiens (Human).